A 587-amino-acid polypeptide reads, in one-letter code: Putative ankyrin repeat protein L66 (587 aa).

ANK repeat units follow at residues 77-106, 108-136, 137-166, 168-196, 199-228, 230-256, 259-288, 302-331, 333-360, 361-390, 392-418, 420-448, 449-478, 480-507, 509-537, and 539-567; these read DKNL…DIRI, NNYP…DVSD, YDNY…DVHC, DNAP…DVNY, NEDL…NIHF, DSLI…ILGN, NIRN…SIEN, FKKN…NVAF, DNLP…NVKI, NYEN…NVKD, TAIY…DLIK, HNEI…INKS, IYDK…DIKS, KFHD…KINN, YKNL…NMKC, and RIDT…KLIC.

This chain is Putative ankyrin repeat protein L66, found in Acanthamoeba polyphaga mimivirus (APMV).